The primary structure comprises 273 residues: MIDLIVSQGRVADRAAWMIEGAARTARALEERYGLKGHYVGEPAPHADDDWSVALPQARETLVAVREAATESIKGDNLTVLVNNTCSVSLATLPVVAREHPDAVVLYIDGHGDFNTPETTDTGYLGGMVLSGACGLWDSGHGAGLRPEQAVLVGSRDIDEGERELIRKAGVRVIPPGEATAQAVLDAVKDAPVWIHIDWDVLEPGSIPADYTVPDGMLPAQIRAVFEAIPAERLIGVELAELNAPADSERAEQAVAVILDMVAPAFDAAAARP.

Residues Asp109, His111, Asp113, Asp198, and Asp200 each contribute to the Mn(2+) site.

This sequence belongs to the arginase family. Mn(2+) is required as a cofactor.

It carries out the reaction N(omega)-hydroxy-L-arginine + H2O = hydroxyurea + L-ornithine. Involved in the biosynthesis of the antibiotic D-cycloserine (DCS), a cyclic structural analog of D-alanine, used as an antitubercular agent. Catalyzes the hydrolysis of N(omega)-hydroxy-L-arginine (NHA) to yield hydroxyurea (HU) and L-ornithine. The polypeptide is N(omega)-hydroxy-L-arginine amidinohydrolase (Streptomyces lavendulae).